The following is a 190-amino-acid chain: Ribose 1,5-bisphosphate phosphokinase PhnN (190 aa).

10–17 (GPSGSGKD) is an ATP binding site.

This sequence belongs to the ribose 1,5-bisphosphokinase family.

It catalyses the reaction alpha-D-ribose 1,5-bisphosphate + ATP = 5-phospho-alpha-D-ribose 1-diphosphate + ADP. Its pathway is metabolic intermediate biosynthesis; 5-phospho-alpha-D-ribose 1-diphosphate biosynthesis; 5-phospho-alpha-D-ribose 1-diphosphate from D-ribose 5-phosphate (route II): step 3/3. Functionally, catalyzes the phosphorylation of ribose 1,5-bisphosphate to 5-phospho-D-ribosyl alpha-1-diphosphate (PRPP). The sequence is that of Ribose 1,5-bisphosphate phosphokinase PhnN from Pseudomonas fluorescens (strain SBW25).